Reading from the N-terminus, the 211-residue chain is Adenylate kinase (211 aa).

Residue 13–18 (GAGKGT) coordinates ATP. The tract at residues 33 to 62 (STGDILRVAVANKTKLGLEAKKFMDAGQLV) is NMP. AMP contacts are provided by residues Thr-34, Arg-39, 60-62 (QLV), 88-91 (GFPR), and Gln-95. Residues 129 to 161 (GRRTSKVTGKIYHIKFNPPVDEKPEDLVQRADD) form an LID region. Residues Arg-130 and 139 to 140 (IY) each bind ATP. Positions 158 and 169 each coordinate AMP. Position 197 (Lys-197) interacts with ATP.

It belongs to the adenylate kinase family. As to quaternary structure, monomer.

It is found in the cytoplasm. It catalyses the reaction AMP + ATP = 2 ADP. It functions in the pathway purine metabolism; AMP biosynthesis via salvage pathway; AMP from ADP: step 1/1. In terms of biological role, catalyzes the reversible transfer of the terminal phosphate group between ATP and AMP. Plays an important role in cellular energy homeostasis and in adenine nucleotide metabolism. The chain is Adenylate kinase from Fusobacterium nucleatum subsp. nucleatum (strain ATCC 25586 / DSM 15643 / BCRC 10681 / CIP 101130 / JCM 8532 / KCTC 2640 / LMG 13131 / VPI 4355).